The chain runs to 181 residues: RING-H2 finger protein ATL72 (181 aa).

A helical membrane pass occupies residues 34-54 (VIILAALLCALICALSLNSAL). The RING-type; atypical zinc-finger motif lies at 114–156 (CLICLGDFEDGEKVRVLPKCNHGFHVRCIDTWLLSRSSCPTCR).

The protein belongs to the RING-type zinc finger family. ATL subfamily.

It is found in the membrane. The catalysed reaction is S-ubiquitinyl-[E2 ubiquitin-conjugating enzyme]-L-cysteine + [acceptor protein]-L-lysine = [E2 ubiquitin-conjugating enzyme]-L-cysteine + N(6)-ubiquitinyl-[acceptor protein]-L-lysine.. It participates in protein modification; protein ubiquitination. In Arabidopsis thaliana (Mouse-ear cress), this protein is RING-H2 finger protein ATL72 (ATL72).